Reading from the N-terminus, the 83-residue chain is Apolipoprotein C-I, acidic form (83 aa).

An N-terminal signal peptide occupies residues 1–26; sequence MRLFLSLPVLVVVLSIVLEGPAPAQG.

It belongs to the apolipoprotein C1 family.

It is found in the secreted. This chain is Apolipoprotein C-I, acidic form (APOC1A), found in Pan paniscus (Pygmy chimpanzee).